Here is a 97-residue protein sequence, read N- to C-terminus: YcgL domain-containing protein Maqu_1609 (97 aa).

The 85-residue stretch at glutamate 5–lysine 89 folds into the YcgL domain.

The protein is YcgL domain-containing protein Maqu_1609 of Marinobacter nauticus (strain ATCC 700491 / DSM 11845 / VT8) (Marinobacter aquaeolei).